The following is a 681-amino-acid chain: MSMSNPLLNIQGLPPFSQIKPEHIRPAVEKLIQDCRNTIEQVLKQPHFTWENFILPLTETNDRLNRAWSPVSHLNSVKNSTELREAYQTCLPLLSEYSTWVGQHKGLYNAYLALKNSAEFADYSIAQKKAIENSLRDFELSGIGLSEEKQQRYGEIVARLSELNSQFSNNVLDATMGWEKLIENEAELAGLPESALQAAQQSAESKGLKGYRFTLEIPSYLPVMTYCENRALREEMYRAYATRASEQGPNAGKWDNSKVMEEILTLRVELAKLLGFNTYTELSLATKMAENPQQVLDFLDHLAERAKPQGEKELQELKGYCEKEFGVTELAPWDIGFYSEKQKQHLYAINDEELRPYFPENRVISGLFELIKRIFNIRAVERKGVDTWHKDVRFFDLIDENDQLRGSFYLDLYAREHKRGGAWMDDCIGRKRKLDGSIETPVAYLTCNFNAPIGNKPALFTHNEVTTLFHEFGHGIHHMLTQIDVSDVAGINGVPWDAVELPSQFMENWCWEEEALAFISGHYETGEPLPKEKLTQLLKAKNFQAAMFILRQLEFGIFDFRLHHTFDAEKTNQILDTLKSVKSQVAVIKGVDWARAPHSFSHIFAGGYAAGYYSYLWAEVLSADAYSRFEEEGIFNPITGKSFLDEILTRGGSEEPMELFKRFRGREPQLDALLRHKGIMN.

His-470 is a binding site for Zn(2+). Glu-471 is a catalytic residue. Zn(2+) contacts are provided by His-474 and His-477.

The protein belongs to the peptidase M3 family. It depends on Zn(2+) as a cofactor.

It carries out the reaction Hydrolysis of oligopeptides, with broad specificity. Gly or Ala commonly occur as P1 or P1' residues, but more distant residues are also important, as is shown by the fact that Z-Gly-Pro-Gly-|-Gly-Pro-Ala is cleaved, but not Z-(Gly)(5).. Its function is as follows. May play a specific role in the degradation of signal peptides after they are released from precursor forms of secreted proteins. Can cleave N-acetyl-L-Ala(4). In Haemophilus influenzae (strain ATCC 51907 / DSM 11121 / KW20 / Rd), this protein is Oligopeptidase A (prlC).